The sequence spans 266 residues: Protein crossbronx-like (266 aa).

The region spanning 15-178 is the UBC core domain; it reads KQGYKILAEY…IQELAISSRR (164 aa). Residues 216-266 form a disordered region; sequence EATCEDDSPPAELLGHIDSSRQLDEDEANQRGKLQAATTDLQHGARCSVAQ.

Belongs to the ubiquitin-conjugating enzyme family. FTS subfamily.

The protein is Protein crossbronx-like of Drosophila ananassae (Fruit fly).